A 370-amino-acid polypeptide reads, in one-letter code: D-alanine--D-alanine ligase (370 aa).

The region spanning 142-348 is the ATP-grasp domain; that stretch reads KQILTHHHIQ…YTALIDQLIQ (207 aa). Position 172–227 (172–227) interacts with ATP; it reads QAHVGDHLFIKPANQGSSIGIHKAENEQEYLDGLADAFKYDYKILVEESIDNPREV. Residues D302, E315, and N317 each contribute to the Mg(2+) site.

Belongs to the D-alanine--D-alanine ligase family. Requires Mg(2+) as cofactor. Mn(2+) is required as a cofactor.

Its subcellular location is the cytoplasm. The catalysed reaction is 2 D-alanine + ATP = D-alanyl-D-alanine + ADP + phosphate + H(+). The protein operates within cell wall biogenesis; peptidoglycan biosynthesis. Functionally, cell wall formation. This Lactiplantibacillus plantarum (strain ATCC BAA-793 / NCIMB 8826 / WCFS1) (Lactobacillus plantarum) protein is D-alanine--D-alanine ligase.